The following is a 314-amino-acid chain: Methionyl-tRNA formyltransferase (314 aa).

113-116 (SLLP) provides a ligand contact to (6S)-5,6,7,8-tetrahydrofolate.

It belongs to the Fmt family.

The enzyme catalyses L-methionyl-tRNA(fMet) + (6R)-10-formyltetrahydrofolate = N-formyl-L-methionyl-tRNA(fMet) + (6S)-5,6,7,8-tetrahydrofolate + H(+). Attaches a formyl group to the free amino group of methionyl-tRNA(fMet). The formyl group appears to play a dual role in the initiator identity of N-formylmethionyl-tRNA by promoting its recognition by IF2 and preventing the misappropriation of this tRNA by the elongation apparatus. This Stutzerimonas stutzeri (strain A1501) (Pseudomonas stutzeri) protein is Methionyl-tRNA formyltransferase.